Consider the following 651-residue polypeptide: Apical membrane antigen 1-like protein (651 aa).

The first 41 residues, 1–41 (MPTESRSILARAEETRCRHLSRLLRAGLVFLLCDVLTSCLA), serve as a signal peptide directing secretion. Residues 42 to 81 (TPELQNTVIRSSKAHHLQLLFSSRSTPAVKFPLDATLSAP) constitute a propeptide, removed in mature form. Over 42–570 (TPELQNTVIR…VEKEGSGGNT (529 aa)) the chain is Extracellular. 7 disulfide bridges follow: Cys141/Cys309, Cys215/Cys248, Cys264/Cys277, Cys327/Cys417, Cys347/Cys408, Cys441/Cys463, and Cys453/Cys475. Asn230 carries an N-linked (GlcNAc...) asparagine glycan. A 1; approximate repeat occupies 483–486 (PPVK). Residues 483-531 (PPVKPPVEPPVEPPVEPPVEPPVEPPVEPPVEPPVEPPVEPPVVEPPTE) form a 12 x 4 AA approximate tandem-repeats of P-P-V-E region. The segment covering 483 to 547 (PPVKPPVEPP…EPPVVLPPTP (65 aa)) has biased composition (pro residues). Positions 483–567 (PPVKPPVEPP…DETVEKEGSG (85 aa)) are disordered. 9 tandem repeats follow at residues 487–490 (PPVE), 491–494 (PPVE), 495–498 (PPVE), 499–502 (PPVE), 503–506 (PPVE), 507–510 (PPVE), 511–514 (PPVE), 515–518 (PPVE), and 519–522 (PPVE). One copy of the 11; approximate repeat lies at 523 to 527 (PPVVE). The 12; approximate repeat unit spans residues 528–531 (PPTE). A helical membrane pass occupies residues 571–591 (ALIAGSVLGMLIILALVGTCV). The Cytoplasmic segment spans residues 592–651 (GFYYRKRPLPPTERPTVEASGGREVEGPSDVAVPPDHSWWGEGEHETESLLGSRAVDAEF). The interval 598-651 (RPLPPTERPTVEASGGREVEGPSDVAVPPDHSWWGEGEHETESLLGSRAVDAEF) is disordered.

Belongs to the apicomplexan parasites AMA1 family. Proteolytically cleaved within its transmembrane domain, releasing a soluble form from the cell surface.

It is found in the cell membrane. The protein localises to the secreted. May play a role in host cell invasion. The chain is Apical membrane antigen 1-like protein from Toxoplasma gondii (strain ATCC 50861 / VEG).